We begin with the raw amino-acid sequence, 469 residues long: Glutamate--tRNA ligase 2 (469 aa).

A 'HIGH' region motif is present at residues P8–G18. The 'KMSKS' region motif lies at K250–R254. Position 253 (K253) interacts with ATP.

It belongs to the class-I aminoacyl-tRNA synthetase family. Glutamate--tRNA ligase type 1 subfamily. As to quaternary structure, monomer.

It localises to the cytoplasm. The enzyme catalyses tRNA(Glu) + L-glutamate + ATP = L-glutamyl-tRNA(Glu) + AMP + diphosphate. In terms of biological role, catalyzes the attachment of glutamate to tRNA(Glu) in a two-step reaction: glutamate is first activated by ATP to form Glu-AMP and then transferred to the acceptor end of tRNA(Glu). The protein is Glutamate--tRNA ligase 2 of Thermotoga sp. (strain RQ2).